A 392-amino-acid polypeptide reads, in one-letter code: Bone morphogenetic protein 15 (392 aa).

The first 25 residues, 1 to 25 (MALLTILRILLWGVVLFMEQRVQMA), serve as a signal peptide directing secretion. The propeptide occupies 26-267 (KPGWPSTALL…ESSFLMRSVR (242 aa)). N-linked (GlcNAc...) asparagine glycosylation is found at Asn85, Asn213, Asn236, Asn349, and Asn373. 3 disulfides stabilise this stretch: Cys291/Cys357, Cys320/Cys389, and Cys324/Cys391.

It belongs to the TGF-beta family. As to quaternary structure, homodimer. But, in contrast to other members of this family, cannot be disulfide-linked. Ovary specific.

The protein localises to the secreted. Its function is as follows. May be involved in follicular development. Oocyte-specific growth/differentiation factor that stimulates folliculogenesis and granulosa cell (GC) growth. The polypeptide is Bone morphogenetic protein 15 (Bmp15) (Mus musculus (Mouse)).